The following is a 308-amino-acid chain: Porphobilinogen deaminase (308 aa).

Cys241 is modified (S-(dipyrrolylmethanemethyl)cysteine).

The protein belongs to the HMBS family. As to quaternary structure, monomer. Requires dipyrromethane as cofactor.

The enzyme catalyses 4 porphobilinogen + H2O = hydroxymethylbilane + 4 NH4(+). The protein operates within porphyrin-containing compound metabolism; protoporphyrin-IX biosynthesis; coproporphyrinogen-III from 5-aminolevulinate: step 2/4. Its function is as follows. Tetrapolymerization of the monopyrrole PBG into the hydroxymethylbilane pre-uroporphyrinogen in several discrete steps. The protein is Porphobilinogen deaminase of Staphylococcus aureus (strain MSSA476).